Consider the following 359-residue polypeptide: DNA replication and repair protein RecF (359 aa).

ATP is bound at residue 30-37 (GPNGSGKT).

This sequence belongs to the RecF family.

The protein localises to the cytoplasm. Its function is as follows. The RecF protein is involved in DNA metabolism; it is required for DNA replication and normal SOS inducibility. RecF binds preferentially to single-stranded, linear DNA. It also seems to bind ATP. The chain is DNA replication and repair protein RecF from Aliivibrio fischeri (strain MJ11) (Vibrio fischeri).